The sequence spans 277 residues: Shikimate dehydrogenase (NADP(+)) (277 aa).

Shikimate is bound by residues 18–20 (SKS) and T65. K69 functions as the Proton acceptor in the catalytic mechanism. E81 contacts NADP(+). 2 residues coordinate shikimate: N90 and D106. Residues 130–134 (GAGGA), 154–159 (NRTFSK), and M217 each bind NADP(+). Residue Y219 coordinates shikimate. An NADP(+)-binding site is contributed by G241.

Belongs to the shikimate dehydrogenase family. In terms of assembly, homodimer.

It catalyses the reaction shikimate + NADP(+) = 3-dehydroshikimate + NADPH + H(+). It participates in metabolic intermediate biosynthesis; chorismate biosynthesis; chorismate from D-erythrose 4-phosphate and phosphoenolpyruvate: step 4/7. In terms of biological role, involved in the biosynthesis of the chorismate, which leads to the biosynthesis of aromatic amino acids. Catalyzes the reversible NADPH linked reduction of 3-dehydroshikimate (DHSA) to yield shikimate (SA). This Vibrio vulnificus (strain CMCP6) protein is Shikimate dehydrogenase (NADP(+)).